Consider the following 152-residue polypeptide: Endoribonuclease YbeY (152 aa).

Zn(2+) contacts are provided by histidine 113, histidine 117, and histidine 123.

This sequence belongs to the endoribonuclease YbeY family. Requires Zn(2+) as cofactor.

The protein localises to the cytoplasm. Its function is as follows. Single strand-specific metallo-endoribonuclease involved in late-stage 70S ribosome quality control and in maturation of the 3' terminus of the 16S rRNA. This chain is Endoribonuclease YbeY, found in Acidovorax sp. (strain JS42).